The chain runs to 72 residues: Sec-independent protein translocase protein TatA (72 aa).

The helical transmembrane segment at 1-21 (MPFGLGLPEILVIGVIALLIF) threads the bilayer. The segment at 41–72 (KSGVSDEPAPQQSASKETAPNPPQSLPSGKDS) is disordered.

This sequence belongs to the TatA/E family. As to quaternary structure, forms a complex with TatC.

The protein resides in the cell inner membrane. In terms of biological role, part of the twin-arginine translocation (Tat) system that transports large folded proteins containing a characteristic twin-arginine motif in their signal peptide across membranes. TatA could form the protein-conducting channel of the Tat system. The chain is Sec-independent protein translocase protein TatA from Gloeobacter violaceus (strain ATCC 29082 / PCC 7421).